We begin with the raw amino-acid sequence, 78 residues long: Large ribosomal subunit protein bL28 (78 aa).

Belongs to the bacterial ribosomal protein bL28 family.

The chain is Large ribosomal subunit protein bL28 from Gloeothece citriformis (strain PCC 7424) (Cyanothece sp. (strain PCC 7424)).